We begin with the raw amino-acid sequence, 135 residues long: ATP synthase epsilon chain (135 aa).

It belongs to the ATPase epsilon chain family. F-type ATPases have 2 components, CF(1) - the catalytic core - and CF(0) - the membrane proton channel. CF(1) has five subunits: alpha(3), beta(3), gamma(1), delta(1), epsilon(1). CF(0) has three main subunits: a, b and c.

It localises to the cell inner membrane. Produces ATP from ADP in the presence of a proton gradient across the membrane. The chain is ATP synthase epsilon chain from Brucella abortus (strain S19).